Consider the following 88-residue polypeptide: Small ribosomal subunit protein uS15 (88 aa).

This sequence belongs to the universal ribosomal protein uS15 family. As to quaternary structure, part of the 30S ribosomal subunit. Forms a bridge to the 50S subunit in the 70S ribosome, contacting the 23S rRNA.

Functionally, one of the primary rRNA binding proteins, it binds directly to 16S rRNA where it helps nucleate assembly of the platform of the 30S subunit by binding and bridging several RNA helices of the 16S rRNA. In terms of biological role, forms an intersubunit bridge (bridge B4) with the 23S rRNA of the 50S subunit in the ribosome. The protein is Small ribosomal subunit protein uS15 of Paracidovorax citrulli (strain AAC00-1) (Acidovorax citrulli).